A 923-amino-acid polypeptide reads, in one-letter code: Smoothelin (923 aa).

Position 2 is an N-acetylalanine (Ala2). Positions 24–89 form a coiled coil; it reads LAERRRIRSA…ARLAGRLESM (66 aa). Residues 134-456 form a disordered region; that stretch reads SRLPSSGPRE…GTGEPGGSMK (323 aa). Low complexity-rich tracts occupy residues 164 to 179 and 192 to 205; these read QEQQ…TPED and RAPP…PASP. Residues 237–252 are compositionally biased toward pro residues; it reads LPHPSEAPSPEPPMSP. Polar residues-rich tracts occupy residues 272–285 and 293–314; these read PSDT…FSNT and TKSC…NREP. Phosphoserine is present on residues Ser299, Ser301, Ser304, and Ser340. Phosphothreonine occurs at positions 359 and 372. The span at 366–389 shows a compositional bias: low complexity; it reads PSLISTTPASSSSSNSSSPSPSDT. Phosphoserine is present on residues Ser501, Ser521, and Ser574. Disordered regions lie at residues 542-578 and 615-772; these read KMEP…PLSA and QRKR…ARKA. Positions 601 to 628 form a coiled coil; it reads EERKLIRAALRELRQRKRDQRDKERERR. Over residues 615 to 638 the composition is skewed to basic and acidic residues; sequence QRKRDQRDKERERRLREARARPGE. Residue Ser641 is modified to Phosphoserine. The span at 674–687 shows a compositional bias: polar residues; sequence NDGTQTARTTTVES. The span at 697 to 721 shows a compositional bias: low complexity; that stretch reads SSSSSTTTTTVQTKSFSSSSSSSSS. The residue at position 735 (Ser735) is a Phosphoserine. Positions 744-756 are enriched in basic and acidic residues; it reads LERRQAEKKKELM. At Ser798 the chain carries Phosphoserine. The Calponin-homology (CH) domain occupies 805–912; that stretch reads NSIKQMLLDW…YVQSLYNHLR (108 aa).

This sequence belongs to the smoothelin family.

Its subcellular location is the cytoplasm. The protein localises to the cytoskeleton. Functionally, structural protein of the cytoskeleton. This chain is Smoothelin (Smtn), found in Mus musculus (Mouse).